The chain runs to 433 residues: uncharacterized protein (433 aa).

Positions 104-349 constitute a Radical SAM core domain; sequence ERGRNIIQVR…ELEYKKKGIE (246 aa). [4Fe-4S] cluster-binding residues include Cys-118, Cys-122, and Cys-125. Residues 171–172 and 236–238 contribute to the S-adenosyl-L-methionine site; these read GE and MLS. Residues 370–433 enclose the TRAM domain; sequence PFKVGEVTKV…KDNIIVAELV (64 aa).

This sequence belongs to the radical SAM superfamily. [4Fe-4S] cluster is required as a cofactor.

This is an uncharacterized protein from Methanocaldococcus jannaschii (strain ATCC 43067 / DSM 2661 / JAL-1 / JCM 10045 / NBRC 100440) (Methanococcus jannaschii).